We begin with the raw amino-acid sequence, 601 residues long: Proline--tRNA ligase (601 aa).

It belongs to the class-II aminoacyl-tRNA synthetase family. ProS type 1 subfamily. In terms of assembly, homodimer.

The protein localises to the cytoplasm. It catalyses the reaction tRNA(Pro) + L-proline + ATP = L-prolyl-tRNA(Pro) + AMP + diphosphate. Catalyzes the attachment of proline to tRNA(Pro) in a two-step reaction: proline is first activated by ATP to form Pro-AMP and then transferred to the acceptor end of tRNA(Pro). As ProRS can inadvertently accommodate and process non-cognate amino acids such as alanine and cysteine, to avoid such errors it has two additional distinct editing activities against alanine. One activity is designated as 'pretransfer' editing and involves the tRNA(Pro)-independent hydrolysis of activated Ala-AMP. The other activity is designated 'posttransfer' editing and involves deacylation of mischarged Ala-tRNA(Pro). The misacylated Cys-tRNA(Pro) is not edited by ProRS. This chain is Proline--tRNA ligase, found in Trichodesmium erythraeum (strain IMS101).